The primary structure comprises 1002 residues: Lon protease homolog, mitochondrial (1002 aa).

A Lon N-terminal domain is found at 102–313 (VIALPLPHRP…LTLELVKKEM (212 aa)). 468-475 (GPPGVGKT) lines the ATP pocket. Positions 811–995 (QTPVGVVMGL…NEIFDIAFQS (185 aa)) constitute a Lon proteolytic domain. Active-site residues include serine 901 and lysine 944.

It belongs to the peptidase S16 family. As to quaternary structure, homohexamer or homoheptamer. Organized in a ring with a central cavity.

It is found in the mitochondrion matrix. It catalyses the reaction Hydrolysis of proteins in presence of ATP.. ATP-dependent serine protease that mediates the selective degradation of misfolded, unassembled or oxidatively damaged polypeptides as well as certain short-lived regulatory proteins in the mitochondrial matrix. May also have a chaperone function in the assembly of inner membrane protein complexes. Participates in the regulation of mitochondrial gene expression and in the maintenance of the integrity of the mitochondrial genome. Binds to mitochondrial DNA in a site-specific manner. The protein is Lon protease homolog, mitochondrial of Oryza sativa subsp. indica (Rice).